Consider the following 202-residue polypeptide: Imidazoleglycerol-phosphate dehydratase (202 aa).

The protein belongs to the imidazoleglycerol-phosphate dehydratase family.

It is found in the cytoplasm. The enzyme catalyses D-erythro-1-(imidazol-4-yl)glycerol 3-phosphate = 3-(imidazol-4-yl)-2-oxopropyl phosphate + H2O. The protein operates within amino-acid biosynthesis; L-histidine biosynthesis; L-histidine from 5-phospho-alpha-D-ribose 1-diphosphate: step 6/9. This is Imidazoleglycerol-phosphate dehydratase from Corynebacterium glutamicum (strain ATCC 13032 / DSM 20300 / JCM 1318 / BCRC 11384 / CCUG 27702 / LMG 3730 / NBRC 12168 / NCIMB 10025 / NRRL B-2784 / 534).